The primary structure comprises 246 residues: UDP-N-acetyl-D-mannosaminuronic acid transferase (246 aa).

This sequence belongs to the glycosyltransferase 26 family.

It catalyses the reaction UDP-N-acetyl-alpha-D-mannosaminouronate + N-acetyl-alpha-D-glucosaminyl-di-trans,octa-cis-undecaprenyl diphosphate = beta-D-ManNAcA-(1-&gt;4)-alpha-D-GlcNAc-di-trans,octa-cis-undecaprenyl diphosphate + UDP + H(+). Its pathway is bacterial outer membrane biogenesis; enterobacterial common antigen biosynthesis. Its function is as follows. Catalyzes the synthesis of Und-PP-GlcNAc-ManNAcA (Lipid II), the second lipid-linked intermediate involved in enterobacterial common antigen (ECA) synthesis. This chain is UDP-N-acetyl-D-mannosaminuronic acid transferase, found in Escherichia fergusonii (strain ATCC 35469 / DSM 13698 / CCUG 18766 / IAM 14443 / JCM 21226 / LMG 7866 / NBRC 102419 / NCTC 12128 / CDC 0568-73).